The chain runs to 568 residues: Natural resistance-associated macrophage protein 2 (568 aa).

Basic and acidic residues predominate over residues 1–20 (MVLDPEEKIPDDGASGDHGD). The disordered stretch occupies residues 1 to 45 (MVLDPEEKIPDDGASGDHGDSASLGAINPAYSNSSLPHSTGDSEE). Over 1-69 (MVLDPEEKIP…EEYSCFSFRK (69 aa)) the chain is Cytoplasmic. The span at 30 to 40 (AYSNSSLPHST) shows a compositional bias: polar residues. A helical transmembrane segment spans residues 70–90 (LWAFTGPGFLMSIAYLDPGNI). The Extracellular portion of the chain corresponds to 91 to 95 (ESDLQ). Residues 96-117 (SGAVAGFKLLWVLLLATIVGLL) form a helical membrane-spanning segment. Topologically, residues 118-154 (LQRLAARLGVVTGLHLAEVCHRQYPKVPRIILWLMVE) are cytoplasmic. The helical transmembrane segment at 155 to 175 (LAIIGSDMQEVIGSAIAINLL) threads the bilayer. The Extracellular portion of the chain corresponds to 176–179 (SAGR). A helical transmembrane segment spans residues 180 to 194 (VPLYGGVLITIADTF). The Cytoplasmic segment spans residues 195–208 (VFLFLDKYGLRKLE). Residues 209-229 (AFFGFLITIMALTFGYEYVTV) form a helical membrane-spanning segment. The Extracellular portion of the chain corresponds to 230–255 (KPSQSQVLRGMFVPSCSGCHTPQVEQ). Residues 256–276 (AVGIVGAVIMPHNMYLHSALV) traverse the membrane as a helical segment. Residues 277–301 (KSRQVNRANKQEVREANKYFFIESC) lie on the Cytoplasmic side of the membrane. The chain crosses the membrane as a helical span at residues 302–322 (IALFVSFIINVFVVSVFAEAF). At 323–360 (FEKTNEQVVEVCRNSSSPHADLFPNDNSTLAVDIYKGG) the chain is on the extracellular side. N-linked (GlcNAc...) asparagine glycans are attached at residues Asn-336 and Asn-349. Residues 361–381 (VVLGCYFGPAALYIWAVGILA) traverse the membrane as a helical segment. Residues 382–408 (AGQSSTMTGTYSGQFVMEGFLNLKWSR) are Cytoplasmic-facing. A helical membrane pass occupies residues 409–429 (FARVILTRSIAIIPTLLVAVF). Topologically, residues 430–440 (QDVEHLTGMND) are extracellular. The chain crosses the membrane as a helical span at residues 441-461 (FLNVLQSLQLPFALIPILTFT). Residues 462 to 482 (SLRPVMSEFSNGIGWRIAGGI) lie on the Cytoplasmic side of the membrane. Residues 483–503 (LVLLVCSINMYFVVVYVQELG) traverse the membrane as a helical segment. The Extracellular segment spans residues 504–506 (HVA). Residues 507–527 (LYVVAAVVSVAYLGFVFYLGW) form a helical membrane-spanning segment. At 528–568 (QCLIALGLSFLDCGRSYHLGLTARPEIYLLNTVDAVSLVSR) the chain is on the cytoplasmic side. The required for early endosome targeting stretch occupies residues 555–559 (YLLNT). A phosphoserine mark is found at Leu-556, Ser-564, and Ser-567.

Belongs to the NRAMP family. As to quaternary structure, forms a complex with NDFIP1 and NEDD4L, in cortical neurons, in response to iron and cobalt exposure; this interaction leads to SLC11A2 ubiquitination by NEDD4L and proteasome-dependent degradation. Interacts with NDFIP1, NDFIP2 and WWP2; this interaction leads to SLC11A2 ubiquitination by WWP2 and subsequent proteasome-dependent degradation. Interacts with COX2 and TOM6 at the outer mitochondrion membrane. Interacts with ARRDC1; this interaction regulates the incorporation of SLC11A2 into extracellular vesicles through an ubiquitination-dependent mechanism. Interacts with ARRDC4; controls the incorporation of SLC11A2 into extracellular vesicles through an ubiquitination-dependent mechanism. Post-translationally, ubiquitinated by WWP2. N-glycosylated. Ubiquitous. In terms of tissue distribution, expressed in proximal intestine, kidney and brain.

It localises to the golgi apparatus. The protein resides in the trans-Golgi network membrane. It is found in the early endosome membrane. Its subcellular location is the recycling endosome membrane. The protein localises to the late endosome membrane. It localises to the lysosome membrane. The protein resides in the apical cell membrane. It is found in the mitochondrion outer membrane. Its subcellular location is the extracellular vesicle membrane. The enzyme catalyses Fe(2+)(in) + H(+)(in) = Fe(2+)(out) + H(+)(out). It catalyses the reaction Cd(2+)(out) + H(+)(out) = Cd(2+)(in) + H(+)(in). The catalysed reaction is Co(2+)(out) + H(+)(out) = Co(2+)(in) + H(+)(in). It carries out the reaction Mn(2+)(in) + H(+)(in) = Mn(2+)(out) + H(+)(out). The enzyme catalyses Zn(2+)(out) + H(+)(out) = Zn(2+)(in) + H(+)(in). It catalyses the reaction Ni(2+)(out) + H(+)(out) = Ni(2+)(in) + H(+)(in). The catalysed reaction is H(+)(in) = H(+)(out). It carries out the reaction Fe(2+)(in) = Fe(2+)(out). Inhibited by 2-(3-carbamimidoylsulfanylmethyl-benzyl)-isothiourea. In terms of biological role, proton-coupled metal ion symporter operating with a proton to metal ion stoichiometry of 1:1. Selectively transports various divalent metal cations, in decreasing affinity: Cd(2+) &gt; Fe(2+) &gt; Co(2+), Mn(2+) &gt;&gt; Zn(2+), Ni(2+), VO(2+). Essential for maintenance of iron homeostasis by modulating intestinal absorption of dietary Fe(2+) and TF-associated endosomal Fe(2+) transport in erythroid precursors and other cells. Enables Fe(2+) and Mn(2+) ion entry into mitochondria, and is thus expected to promote mitochondrial heme synthesis, iron-sulfur cluster biogenesis and antioxidant defense. Can mediate uncoupled fluxes of either protons or metal ions. The protein is Natural resistance-associated macrophage protein 2 (Slc11a2) of Rattus norvegicus (Rat).